We begin with the raw amino-acid sequence, 345 residues long: Holliday junction branch migration complex subunit RuvB (345 aa).

Residues 1 to 182 (MDQRIIASSS…FGIVQRLEFY (182 aa)) are large ATPase domain (RuvB-L). ATP-binding positions include I21, R22, G63, K66, T67, T68, 129–131 (EDF), R172, Y182, and R219. T67 lines the Mg(2+) pocket. Residues 183-253 (SPQELTRIVI…VAQAAMQMLK (71 aa)) are small ATPAse domain (RuvB-S). The tract at residues 256-345 (PEGFDELDRR…PGIGEPGDLF (90 aa)) is head domain (RuvB-H). DNA contacts are provided by R292, R311, and R316.

This sequence belongs to the RuvB family. Homohexamer. Forms an RuvA(8)-RuvB(12)-Holliday junction (HJ) complex. HJ DNA is sandwiched between 2 RuvA tetramers; dsDNA enters through RuvA and exits via RuvB. An RuvB hexamer assembles on each DNA strand where it exits the tetramer. Each RuvB hexamer is contacted by two RuvA subunits (via domain III) on 2 adjacent RuvB subunits; this complex drives branch migration. In the full resolvosome a probable DNA-RuvA(4)-RuvB(12)-RuvC(2) complex forms which resolves the HJ.

Its subcellular location is the cytoplasm. The catalysed reaction is ATP + H2O = ADP + phosphate + H(+). The RuvA-RuvB-RuvC complex processes Holliday junction (HJ) DNA during genetic recombination and DNA repair, while the RuvA-RuvB complex plays an important role in the rescue of blocked DNA replication forks via replication fork reversal (RFR). RuvA specifically binds to HJ cruciform DNA, conferring on it an open structure. The RuvB hexamer acts as an ATP-dependent pump, pulling dsDNA into and through the RuvAB complex. RuvB forms 2 homohexamers on either side of HJ DNA bound by 1 or 2 RuvA tetramers; 4 subunits per hexamer contact DNA at a time. Coordinated motions by a converter formed by DNA-disengaged RuvB subunits stimulates ATP hydrolysis and nucleotide exchange. Immobilization of the converter enables RuvB to convert the ATP-contained energy into a lever motion, pulling 2 nucleotides of DNA out of the RuvA tetramer per ATP hydrolyzed, thus driving DNA branch migration. The RuvB motors rotate together with the DNA substrate, which together with the progressing nucleotide cycle form the mechanistic basis for DNA recombination by continuous HJ branch migration. Branch migration allows RuvC to scan DNA until it finds its consensus sequence, where it cleaves and resolves cruciform DNA. The protein is Holliday junction branch migration complex subunit RuvB of Xanthomonas oryzae pv. oryzae (strain MAFF 311018).